The sequence spans 406 residues: NADH-ubiquinone oxidoreductase 49 kDa subunit (406 aa).

The protein belongs to the complex I 49 kDa subunit family. Complex I is composed of 45 different subunits. Component of the iron-sulfur (IP) fragment of the enzyme.

Its subcellular location is the mitochondrion inner membrane. The enzyme catalyses a ubiquinone + NADH + 5 H(+)(in) = a ubiquinol + NAD(+) + 4 H(+)(out). Its function is as follows. Core subunit of the mitochondrial membrane respiratory chain NADH dehydrogenase (Complex I) that is believed to belong to the minimal assembly required for catalysis. Complex I functions in the transfer of electrons from NADH to the respiratory chain. The immediate electron acceptor for the enzyme is believed to be ubiquinone. This Dictyostelium discoideum (Social amoeba) protein is NADH-ubiquinone oxidoreductase 49 kDa subunit (nad7).